Consider the following 475-residue polypeptide: Aspartyl/glutamyl-tRNA(Asn/Gln) amidotransferase subunit B (475 aa).

It belongs to the GatB/GatE family. GatB subfamily. Heterotrimer of A, B and C subunits.

It catalyses the reaction L-glutamyl-tRNA(Gln) + L-glutamine + ATP + H2O = L-glutaminyl-tRNA(Gln) + L-glutamate + ADP + phosphate + H(+). The enzyme catalyses L-aspartyl-tRNA(Asn) + L-glutamine + ATP + H2O = L-asparaginyl-tRNA(Asn) + L-glutamate + ADP + phosphate + 2 H(+). Its function is as follows. Allows the formation of correctly charged Asn-tRNA(Asn) or Gln-tRNA(Gln) through the transamidation of misacylated Asp-tRNA(Asn) or Glu-tRNA(Gln) in organisms which lack either or both of asparaginyl-tRNA or glutaminyl-tRNA synthetases. The reaction takes place in the presence of glutamine and ATP through an activated phospho-Asp-tRNA(Asn) or phospho-Glu-tRNA(Gln). The sequence is that of Aspartyl/glutamyl-tRNA(Asn/Gln) amidotransferase subunit B from Chromobacterium violaceum (strain ATCC 12472 / DSM 30191 / JCM 1249 / CCUG 213 / NBRC 12614 / NCIMB 9131 / NCTC 9757 / MK).